We begin with the raw amino-acid sequence, 106 residues long: MAARIRKGDRVVVIAGASKGREGEVLRVLPAENKAVVSGVAVAKRHTKARGMGEQGGIIQKEMPVHLSNIALIDPETKKPTRVGFRVLEDGRKVRVARKSDSVIDG.

This sequence belongs to the universal ribosomal protein uL24 family. Part of the 50S ribosomal subunit.

Functionally, one of two assembly initiator proteins, it binds directly to the 5'-end of the 23S rRNA, where it nucleates assembly of the 50S subunit. One of the proteins that surrounds the polypeptide exit tunnel on the outside of the subunit. In Acidiphilium cryptum (strain JF-5), this protein is Large ribosomal subunit protein uL24.